The primary structure comprises 1017 residues: Fanconi-associated nuclease 1 (1017 aa).

The span at 1 to 10 shows a compositional bias: basic and acidic residues; sequence MMSEGKPPDK. Residues 1–23 form a disordered region; the sequence is MMSEGKPPDKKRPRRSLSISKNK. Basic residues predominate over residues 11-23; sequence KRPRRSLSISKNK. Positions 14-22 match the D-box motif; sequence RRSLSISKN. The UBZ4-type zinc-finger motif lies at 41–69; that stretch reads KLACPVCSKMVPRYDLNRHLDEMCANNDF. 4 residues coordinate Zn(2+): Cys44, Cys47, His59, and Cys64. Disordered stretches follow at residues 95–121 and 170–189; these read EDVTPKKSPPPKTNLTPGQSDSAKREV and IDKDEEFAGSSPQSSKSTVV. A compositionally biased stretch (polar residues) spans 179–189; sequence SSPQSSKSTVV. Ser180 bears the Phosphoserine mark. The KEN box signature appears at 212–214; that stretch reads KEN. Positions 671–696 form a coiled coil; the sequence is SRFVEILQRLHMYEEAVRELESLLSQ. Positions 834, 960, 975, and 976 each coordinate Mn(2+). The VRR-NUC domain occupies 895-1007; sequence EESLRAWVAA…GAEVEVCHVV (113 aa).

The protein belongs to the FAN1 family. Interacts with FANCD2 (when monoubiquitinated). Interacts with FANCI, MLH1, MLH3 and PMS2. Requires Mn(2+) as cofactor. The cofactor is Mg(2+). Ubiquitinated and degraded during mitotic exit by the APC/C-Cdh1 complex.

It is found in the nucleus. The enzyme catalyses Hydrolytically removes 5'-nucleotides successively from the 3'-hydroxy termini of 3'-hydroxy-terminated oligonucleotides.. Nuclease required for the repair of DNA interstrand cross-links (ICL) recruited at sites of DNA damage by monoubiquitinated FANCD2. Specifically involved in repair of ICL-induced DNA breaks by being required for efficient homologous recombination, probably in the resolution of homologous recombination intermediates. Not involved in DNA double-strand breaks resection. Acts as a 5'-3' exonuclease that anchors at a cut end of DNA and cleaves DNA successively at every third nucleotide, allowing to excise an ICL from one strand through flanking incisions. Probably keeps excising with 3'-flap annealing until it reaches and unhooks the ICL. Acts at sites that have a 5'-terminal phosphate anchor at a nick or a 1- or 2-nucleotide flap and is augmented by a 3' flap. Also has endonuclease activity toward 5'-flaps. The polypeptide is Fanconi-associated nuclease 1 (Homo sapiens (Human)).